The primary structure comprises 645 residues: 1,4-alpha-glucan branching enzyme GlgB (645 aa).

D309 (nucleophile) is an active-site residue. The Proton donor role is filled by E352. The disordered stretch occupies residues 619–645 (VKTRKGSKKQDGSKTKVRSNVTSRGKR). Over residues 636 to 645 (RSNVTSRGKR) the composition is skewed to polar residues.

It belongs to the glycosyl hydrolase 13 family. GlgB subfamily. In terms of assembly, monomer.

The enzyme catalyses Transfers a segment of a (1-&gt;4)-alpha-D-glucan chain to a primary hydroxy group in a similar glucan chain.. It participates in glycan biosynthesis; glycogen biosynthesis. Catalyzes the formation of the alpha-1,6-glucosidic linkages in glycogen by scission of a 1,4-alpha-linked oligosaccharide from growing alpha-1,4-glucan chains and the subsequent attachment of the oligosaccharide to the alpha-1,6 position. The protein is 1,4-alpha-glucan branching enzyme GlgB of Bacillus mycoides (strain KBAB4) (Bacillus weihenstephanensis).